We begin with the raw amino-acid sequence, 550 residues long: Acidic amino acid decarboxylase GADL1 (550 aa).

At Lys362 the chain carries N6-(pyridoxal phosphate)lysine.

Belongs to the group II decarboxylase family. In terms of assembly, homodimer. Requires pyridoxal 5'-phosphate as cofactor. In terms of tissue distribution, expressed in skeletal muscles and kidney (at protein level). Expressed in skeletal muscle and weakly in brain. Not expressed in liver or kidney. Expressed in brain, olfactory bulb, liver, muscle and kidney with the highest expression in olfactory bulb and almost not detected in liver (at protein level).

The catalysed reaction is L-aspartate + H(+) = beta-alanine + CO2. It carries out the reaction 3-sulfino-L-alanine + H(+) = hypotaurine + CO2. It catalyses the reaction L-cysteate + H(+) = taurine + CO2. With respect to regulation, activated weakly by 0.2-0.4 mM Li(+). Inhibited by bis-carboxymethyl-trithiocarbonate, ethylxanthogenacetic acid and 2,5-disulfoaniline. Its function is as follows. Catalyzes the decarboxylation of L-aspartate, 3-sulfino-L-alanine (cysteine sulfinic acid), and L-cysteate to beta-alanine, hypotaurine and taurine, respectively. The preferred substrate is L-aspartate. Does not exhibit any decarboxylation activity toward glutamate. The sequence is that of Acidic amino acid decarboxylase GADL1 from Mus musculus (Mouse).